A 422-amino-acid chain; its full sequence is Calpain-2 catalytic subunit (422 aa).

A Calpain catalytic domain is found at 1-66 (QKLIRIRNPW…YSRLEICNLT (66 aa)). The active site involves asparagine 8. Residues glutamate 14, aspartate 21, and glutamate 45 each contribute to the Ca(2+) site. A domain III region spans residues 67-236 (PDTLTSDTYK…KKADYQAVDD (170 aa)). The tract at residues 237–251 (EIEADLEEADVSEDD) is linker. The interval 252 to 422 (IDDGFRRLFA…LISWLCFSVL (171 aa)) is domain IV. Alanine 264, aspartate 267, glutamate 269, glutamate 274, aspartate 307, aspartate 309, threonine 311, lysine 313, glutamate 318, aspartate 337, aspartate 339, serine 341, threonine 343, glutamate 348, aspartate 380, and asparagine 383 together coordinate Ca(2+). 2 consecutive EF-hand domains span residues 294 to 327 (LSIETCKIMVDMLDSDGTGKLGLKEFYVLWTKIQ) and 324 to 359 (TKIQKYQKIYREIDVDRSGTMNSYEMRKALEEAGFK). Residues 389–422 (VRLETLFKIFKQLDPDNTGMIQLDLISWLCFSVL) enclose the EF-hand 3 domain.

The protein belongs to the peptidase C2 family. As to quaternary structure, forms a heterodimer with a small (regulatory) subunit (CAPNS1). Interacts with CPEB3; this leads to cleavage of CPEB3. Ca(2+) is required as a cofactor. Ubiquitous.

It localises to the cytoplasm. The protein localises to the cell membrane. The enzyme catalyses Broad endopeptidase specificity.. Activated by 200-1000 micromolar concentrations of calcium and inhibited by calpastatin. Calcium-regulated non-lysosomal thiol-protease which catalyzes limited proteolysis of substrates involved in cytoskeletal remodeling and signal transduction. Proteolytically cleaves MYOC at 'Arg-226'. Proteolytically cleaves CPEB3 following neuronal stimulation which abolishes CPEB3 translational repressor activity, leading to translation of CPEB3 target mRNAs. The chain is Calpain-2 catalytic subunit (CAPN2) from Oryctolagus cuniculus (Rabbit).